A 545-amino-acid chain; its full sequence is Probable bifunctional tRNA threonylcarbamoyladenosine biosynthesis protein (545 aa).

The kae1 stretch occupies residues 1–329; that stretch reads MDTSKDLICI…YRSDMVEVNW (329 aa). Fe cation-binding residues include histidine 112, histidine 116, and tyrosine 133. L-threonylcarbamoyladenylate-binding positions include 133–137, aspartate 165, glycine 178, glutamate 182, and asparagine 262; that span reads YVSGG. Aspartate 290 is a binding site for Fe cation. The Protein kinase domain occupies 344–545; that stretch reads IIPEHLIGKG…KEVEKRARYL (202 aa). ATP-binding positions include 350–358 and lysine 371; that span reads IGKGAEADI. Aspartate 463 (proton acceptor; for kinase activity) is an active-site residue.

This sequence in the N-terminal section; belongs to the KAE1 / TsaD family. It in the C-terminal section; belongs to the protein kinase superfamily. Tyr protein kinase family. BUD32 subfamily. Component of the KEOPS complex that consists of Kae1, Bud32, Cgi121 and Pcc1; the whole complex dimerizes. Fe(2+) is required as a cofactor.

It localises to the cytoplasm. It catalyses the reaction L-seryl-[protein] + ATP = O-phospho-L-seryl-[protein] + ADP + H(+). The catalysed reaction is L-threonyl-[protein] + ATP = O-phospho-L-threonyl-[protein] + ADP + H(+). It carries out the reaction L-threonylcarbamoyladenylate + adenosine(37) in tRNA = N(6)-L-threonylcarbamoyladenosine(37) in tRNA + AMP + H(+). Functionally, required for the formation of a threonylcarbamoyl group on adenosine at position 37 (t(6)A37) in tRNAs that read codons beginning with adenine. Is a component of the KEOPS complex that is probably involved in the transfer of the threonylcarbamoyl moiety of threonylcarbamoyl-AMP (TC-AMP) to the N6 group of A37. The Kae1 domain likely plays a direct catalytic role in this reaction. The Bud32 domain probably displays kinase activity that regulates Kae1 function. In Methanococcus maripaludis (strain C5 / ATCC BAA-1333), this protein is Probable bifunctional tRNA threonylcarbamoyladenosine biosynthesis protein.